An 88-amino-acid chain; its full sequence is Small ribosomal subunit protein uS19 (88 aa).

The protein belongs to the universal ribosomal protein uS19 family.

Functionally, protein S19 forms a complex with S13 that binds strongly to the 16S ribosomal RNA. This Chlamydia felis (strain Fe/C-56) (Chlamydophila felis) protein is Small ribosomal subunit protein uS19.